We begin with the raw amino-acid sequence, 150 residues long: Small heat shock protein HspE (150 aa).

The sHSP domain maps to 27 to 137; that stretch reads VDNGDTYPPY…KPRQIAIDVA (111 aa).

Belongs to the small heat shock protein (HSP20) family.

This is Small heat shock protein HspE (hspE) from Bradyrhizobium diazoefficiens (strain JCM 10833 / BCRC 13528 / IAM 13628 / NBRC 14792 / USDA 110).